The primary structure comprises 464 residues: DNA repair protein KRE29 (464 aa).

The interval 1–69 (MGSVNSSPNE…SDEEFSSLEN (69 aa)) is disordered. Positions 53–65 (PENDSLNSDEEFS) are enriched in acidic residues. A phosphoserine mark is found at S81 and S101.

Component of the Smc5-Smc6 complex which consists of KRE29, MMS21, NSE1, NSE3, NSE4, NSE5, SMC5 and SMC6. Interacts with NSE5.

It is found in the nucleus. The protein localises to the cytoplasm. Its function is as follows. Acts in a DNA repair pathway for removal of UV-induced DNA damage that is distinct from classical nucleotide excision repair and in repair of ionizing radiation damage. Functions in homologous recombination repair of DNA double strand breaks and in recovery of stalled replication forks. This Saccharomyces cerevisiae (strain ATCC 204508 / S288c) (Baker's yeast) protein is DNA repair protein KRE29 (KRE29).